The sequence spans 363 residues: Chorismate synthase (363 aa).

R48 provides a ligand contact to NADP(+). FMN is bound by residues 125 to 127, 238 to 239, G278, 293 to 297, and R319; these read RSS, NA, and KPTAS.

It belongs to the chorismate synthase family. Homotetramer. FMNH2 serves as cofactor.

It carries out the reaction 5-O-(1-carboxyvinyl)-3-phosphoshikimate = chorismate + phosphate. It participates in metabolic intermediate biosynthesis; chorismate biosynthesis; chorismate from D-erythrose 4-phosphate and phosphoenolpyruvate: step 7/7. In terms of biological role, catalyzes the anti-1,4-elimination of the C-3 phosphate and the C-6 proR hydrogen from 5-enolpyruvylshikimate-3-phosphate (EPSP) to yield chorismate, which is the branch point compound that serves as the starting substrate for the three terminal pathways of aromatic amino acid biosynthesis. This reaction introduces a second double bond into the aromatic ring system. The protein is Chorismate synthase of Acinetobacter baylyi (strain ATCC 33305 / BD413 / ADP1).